The following is a 93-amino-acid chain: Alpha-defensin 9 (93 aa).

A signal peptide spans 1-19 (MKTLVLLSALVLLAFQVQA). Positions 20–58 (DPIQNTDEETKTEEQPGEEDQAVSVSFGDPEGSSLQEES) are excised as a propeptide. The disordered stretch occupies residues 23–56 (QNTDEETKTEEQPGEEDQAVSVSFGDPEGSSLQE). Intrachain disulfides connect C64/C92, C66/C81, and C71/C91.

The protein belongs to the alpha-defensin family. In terms of tissue distribution, paneth cells of the small bowel.

It is found in the secreted. Functionally, probably contributes to the antimicrobial barrier function of the small bowel mucosa. The protein is Alpha-defensin 9 (Defa9) of Mus musculus (Mouse).